The primary structure comprises 129 residues: Phosphoribosyl-AMP cyclohydrolase (129 aa).

Residue Asp-76 participates in Mg(2+) binding. Position 77 (Cys-77) interacts with Zn(2+). Residues Asp-78 and Asp-80 each contribute to the Mg(2+) site. Zn(2+) contacts are provided by Cys-97 and Cys-104.

The protein belongs to the PRA-CH family. Homodimer. Mg(2+) serves as cofactor. Requires Zn(2+) as cofactor.

The protein resides in the cytoplasm. The enzyme catalyses 1-(5-phospho-beta-D-ribosyl)-5'-AMP + H2O = 1-(5-phospho-beta-D-ribosyl)-5-[(5-phospho-beta-D-ribosylamino)methylideneamino]imidazole-4-carboxamide. Its pathway is amino-acid biosynthesis; L-histidine biosynthesis; L-histidine from 5-phospho-alpha-D-ribose 1-diphosphate: step 3/9. Its function is as follows. Catalyzes the hydrolysis of the adenine ring of phosphoribosyl-AMP. This is Phosphoribosyl-AMP cyclohydrolase from Methylibium petroleiphilum (strain ATCC BAA-1232 / LMG 22953 / PM1).